Reading from the N-terminus, the 71-residue chain is UPF0435 protein BPUM_0734 (71 aa).

It belongs to the UPF0435 family.

The polypeptide is UPF0435 protein BPUM_0734 (Bacillus pumilus (strain SAFR-032)).